The sequence spans 145 residues: Large ribosomal subunit protein uL11 (145 aa).

The protein belongs to the universal ribosomal protein uL11 family. Part of the ribosomal stalk of the 50S ribosomal subunit. Interacts with L10 and the large rRNA to form the base of the stalk. L10 forms an elongated spine to which L12 dimers bind in a sequential fashion forming a multimeric L10(L12)X complex. One or more lysine residues are methylated.

In terms of biological role, forms part of the ribosomal stalk which helps the ribosome interact with GTP-bound translation factors. The chain is Large ribosomal subunit protein uL11 from Coxiella burnetii (strain CbuK_Q154) (Coxiella burnetii (strain Q154)).